We begin with the raw amino-acid sequence, 268 residues long: uncharacterized protein (268 aa).

The protein belongs to the LarE family.

This is an uncharacterized protein from Synechocystis sp. (strain ATCC 27184 / PCC 6803 / Kazusa).